The following is a 1006-amino-acid chain: Phosphatidylinositol 4,5-bisphosphate 5-phosphatase A (1006 aa).

Residues 1 to 416 (MEGQSSRGSR…SSSPWSAQPT (416 aa)) are disordered. The segment covering 27–41 (VAQTGAPSKVDSSFQ) has biased composition (polar residues). Arginine 56 bears the Asymmetric dimethylarginine; alternate mark. Position 56 is an omega-N-methylarginine; alternate (arginine 56). Arginine 65 is modified (omega-N-methylarginine). Asymmetric dimethylarginine is present on arginine 76. Arginine 83 carries the post-translational modification Asymmetric dimethylarginine; alternate. Omega-N-methylarginine; alternate is present on arginine 83. The span at 94–112 (GQKTATAHRSSSLAPTSVG) shows a compositional bias: polar residues. Residues 102-107 (RSSSLA) carry the RSXSXX motif 1 motif. Low complexity predominate over residues 180–193 (LAASGLSLALASEE). Positions 196-209 (PELPSTPSPVPSPV) are enriched in pro residues. The segment covering 210–234 (LSPTQEQALAPASTASGAASVGQTS) has biased composition (low complexity). Over residues 256–273 (PAQTSGPTGSPPCIQTSP) the composition is skewed to polar residues. 2 positions are modified to phosphoserine: serine 291 and serine 324. Residues 337-347 (VPPPLPKPPRS) are compositionally biased toward pro residues. The SH3-binding signature appears at 345–350 (PRSPSR). 2 stretches are compositionally biased toward low complexity: residues 348-360 (PSRS…NRSP) and 398-409 (TTSSSTSTLSSS). An RSXSXX motif 2 motif is present at residues 350-355 (RSPSHS). The segment at 425 to 728 (ITVVTWNVGT…SDHKPVAAQF (304 aa)) is catalytic. Residues 729 to 840 (LLQFAFRDDM…IGITEPFQIS (112 aa)) are required for ruffle localization. The span at 844 to 858 (SELASSSTDSSGTSS) shows a compositional bias: low complexity. Positions 844–1006 (SELASSSTDS…RGLEEGGLGP (163 aa)) are disordered. 2 short sequence motifs (RSXSXX motif) span residues 874–879 (RSPSPG) and 885–890 (RSRSPG). Serine 903 carries the post-translational modification Phosphoserine. An RSXSXX motif 5 motif is present at residues 911 to 916 (RSPSPQ). Over residues 927–946 (RSSNGSSRGSSEEGPSGLPG) the composition is skewed to low complexity. Serine 990 carries the post-translational modification Phosphoserine.

This sequence belongs to the inositol 1,4,5-trisphosphate 5-phosphatase type II family.

The protein resides in the cytoplasm. The enzyme catalyses 1D-myo-inositol 1,4,5-trisphosphate + H2O = 1D-myo-inositol 1,4-bisphosphate + phosphate. The catalysed reaction is 1D-myo-inositol 1,3,4,5-tetrakisphosphate + H2O = 1D-myo-inositol 1,3,4-trisphosphate + phosphate. It catalyses the reaction a 1,2-diacyl-sn-glycero-3-phospho-(1D-myo-inositol-4,5-bisphosphate) + H2O = a 1,2-diacyl-sn-glycero-3-phospho-(1D-myo-inositol 4-phosphate) + phosphate. Inositol 5-phosphatase, which converts inositol 1,4,5-trisphosphate to inositol 1,4-bisphosphate. Also converts phosphatidylinositol 4,5-bisphosphate to phosphatidylinositol 4-phosphate and inositol 1,3,4,5-tetrakisphosphate to inositol 1,3,4-trisphosphate in vitro. May be involved in modulation of the function of inositol and phosphatidylinositol polyphosphate-binding proteins that are present at membranes ruffles. This is Phosphatidylinositol 4,5-bisphosphate 5-phosphatase A (INPP5J) from Homo sapiens (Human).